Consider the following 951-residue polypeptide: Bifunctional glutamine synthetase adenylyltransferase/adenylyl-removing enzyme (951 aa).

Residues 1–445 (MSILPLPALP…VFDELIGDDA (445 aa)) are adenylyl removase. The adenylyl transferase stretch occupies residues 454–951 (HSSYSSLWQD…VSWNKWLMGA (498 aa)).

The protein belongs to the GlnE family. Requires Mg(2+) as cofactor.

The catalysed reaction is [glutamine synthetase]-O(4)-(5'-adenylyl)-L-tyrosine + phosphate = [glutamine synthetase]-L-tyrosine + ADP. It catalyses the reaction [glutamine synthetase]-L-tyrosine + ATP = [glutamine synthetase]-O(4)-(5'-adenylyl)-L-tyrosine + diphosphate. In terms of biological role, involved in the regulation of glutamine synthetase GlnA, a key enzyme in the process to assimilate ammonia. When cellular nitrogen levels are high, the C-terminal adenylyl transferase (AT) inactivates GlnA by covalent transfer of an adenylyl group from ATP to specific tyrosine residue of GlnA, thus reducing its activity. Conversely, when nitrogen levels are low, the N-terminal adenylyl removase (AR) activates GlnA by removing the adenylyl group by phosphorolysis, increasing its activity. The regulatory region of GlnE binds the signal transduction protein PII (GlnB) which indicates the nitrogen status of the cell. The protein is Bifunctional glutamine synthetase adenylyltransferase/adenylyl-removing enzyme of Pectobacterium atrosepticum (strain SCRI 1043 / ATCC BAA-672) (Erwinia carotovora subsp. atroseptica).